The sequence spans 612 residues: Bifunctional lycopene cyclase/phytoene synthase (612 aa).

The tract at residues Met-1–Asn-268 is lycopene beta-cyclase. 7 consecutive transmembrane segments (helical) span residues Trp-3 to Val-23, Leu-31 to Leu-51, Leu-112 to Ser-130, Ile-148 to Gly-168, Gly-171 to Ile-191, Asn-203 to Leu-223, and Ile-246 to Cys-266. The tract at residues Thr-275–Lys-612 is phytoene synthase.

It in the N-terminal section; belongs to the lycopene beta-cyclase family. In the C-terminal section; belongs to the phytoene/squalene synthase family.

The protein localises to the membrane. The enzyme catalyses all-trans-lycopene = gamma-carotene. The catalysed reaction is gamma-carotene = all-trans-beta-carotene. It catalyses the reaction 2 (2E,6E,10E)-geranylgeranyl diphosphate = 15-cis-phytoene + 2 diphosphate. It participates in carotenoid biosynthesis; beta-carotene biosynthesis. The protein operates within carotenoid biosynthesis; phytoene biosynthesis; all-trans-phytoene from geranylgeranyl diphosphate: step 1/1. Functionally, bifunctional enzyme; part of the car gene cluster that mediates the biosynthesis of neurosporaxanthin, a carboxylic apocarotenoid acting as an essential protective pigments and leading to orange pigmentation. CarAR catalyzes the first step of the pathway by converting geranylgeranyl diphosphate to phytoene, as well as the later cyclization step that transforms the carB product lycopene into gamma-carotene. CarAR also converts part of gamma-carotene into beta-carotene. Neurosporaxanthin is synthesized from geranyl-geranyl pyrophosphate (GGPP) through several enzymatic activities. Phytoene synthase activity performed by the bifunctional enzyme carAR first produces phytoene from geranyl-geranyl pyrophosphate (GGPP). The phytoene dehydrogenase carB then introduces 4 desaturations to lead to lycopene which is substrate of the carotene cyclase activity of carAR that leads to the production of gamma-carotene. CarB then performs a 5th desaturation reaction to yield torulene. Torulene is the substrate of the dioxidase carT that breaks the molecule, removing five carbon atoms to yield beta-apo-4'-carotenal, whereas the aldehyde dehydrogenase carD mediates the last step by converting beta-apo-4'-carotenal into neurosporaxanthin. In Fusarium fujikuroi (Bakanae and foot rot disease fungus), this protein is Bifunctional lycopene cyclase/phytoene synthase.